A 384-amino-acid chain; its full sequence is S-adenosylmethionine synthase (384 aa).

Residue His15 coordinates ATP. Asp17 provides a ligand contact to Mg(2+). Position 43 (Glu43) interacts with K(+). L-methionine-binding residues include Glu56 and Gln99. The segment at 99–109 (QSPDINQGVDR) is flexible loop. Residues 164-166 (DAK), 230-231 (RF), Asp239, 245-246 (RK), Ala262, and Lys266 each bind ATP. Asp239 provides a ligand contact to L-methionine. Lys270 is an L-methionine binding site.

Belongs to the AdoMet synthase family. As to quaternary structure, homotetramer; dimer of dimers. It depends on Mg(2+) as a cofactor. K(+) serves as cofactor.

The protein resides in the cytoplasm. It catalyses the reaction L-methionine + ATP + H2O = S-adenosyl-L-methionine + phosphate + diphosphate. The protein operates within amino-acid biosynthesis; S-adenosyl-L-methionine biosynthesis; S-adenosyl-L-methionine from L-methionine: step 1/1. Its function is as follows. Catalyzes the formation of S-adenosylmethionine (AdoMet) from methionine and ATP. The overall synthetic reaction is composed of two sequential steps, AdoMet formation and the subsequent tripolyphosphate hydrolysis which occurs prior to release of AdoMet from the enzyme. The sequence is that of S-adenosylmethionine synthase from Salmonella arizonae (strain ATCC BAA-731 / CDC346-86 / RSK2980).